The following is a 1235-amino-acid chain: ATP-dependent helicase/nuclease subunit A (1235 aa).

The 471-residue stretch at 12–482 folds into the UvrD-like helicase ATP-binding domain; it reads SLWTDDQWKA…IDLSQNFRSR (471 aa). Residue 33 to 40 coordinates ATP; it reads AAAGSGKT. One can recognise a UvrD-like helicase C-terminal domain in the interval 509 to 800; sequence AAELTLGANF…RMMTIHASKG (292 aa).

Belongs to the helicase family. AddA subfamily. As to quaternary structure, heterodimer of AddA and AddB/RexB. Mg(2+) is required as a cofactor.

The enzyme catalyses Couples ATP hydrolysis with the unwinding of duplex DNA by translocating in the 3'-5' direction.. It catalyses the reaction ATP + H2O = ADP + phosphate + H(+). Its function is as follows. The heterodimer acts as both an ATP-dependent DNA helicase and an ATP-dependent, dual-direction single-stranded exonuclease. Recognizes the chi site generating a DNA molecule suitable for the initiation of homologous recombination. The AddA nuclease domain is required for chi fragment generation; this subunit has the helicase and 3' -&gt; 5' nuclease activities. The protein is ATP-dependent helicase/nuclease subunit A of Listeria monocytogenes serovar 1/2a (strain ATCC BAA-679 / EGD-e).